The following is a 408-amino-acid chain: Aminomethyltransferase, mitochondrial (408 aa).

The N-terminal 30 residues, methionine 1–phenylalanine 30, are a transit peptide targeting the mitochondrion. The substrate site is built by glutamate 235, arginine 266, and tyrosine 404.

It belongs to the GcvT family. The glycine cleavage system is composed of four proteins: P, T, L and H.

It localises to the mitochondrion. The catalysed reaction is N(6)-[(R)-S(8)-aminomethyldihydrolipoyl]-L-lysyl-[protein] + (6S)-5,6,7,8-tetrahydrofolate = N(6)-[(R)-dihydrolipoyl]-L-lysyl-[protein] + (6R)-5,10-methylene-5,6,7,8-tetrahydrofolate + NH4(+). Functionally, the glycine cleavage system catalyzes the degradation of glycine. This Pisum sativum (Garden pea) protein is Aminomethyltransferase, mitochondrial (GDCST).